The chain runs to 637 residues: 1-deoxy-D-xylulose-5-phosphate synthase (637 aa).

Residues His76 and 117-119 each bind thiamine diphosphate; that span reads GHS. Asp148 contacts Mg(2+). Thiamine diphosphate is bound by residues 149–150, Asn177, Tyr294, and Glu381; that span reads GA. Asn177 serves as a coordination point for Mg(2+).

Belongs to the transketolase family. DXPS subfamily. Homodimer. The cofactor is Mg(2+). It depends on thiamine diphosphate as a cofactor.

The catalysed reaction is D-glyceraldehyde 3-phosphate + pyruvate + H(+) = 1-deoxy-D-xylulose 5-phosphate + CO2. It functions in the pathway metabolic intermediate biosynthesis; 1-deoxy-D-xylulose 5-phosphate biosynthesis; 1-deoxy-D-xylulose 5-phosphate from D-glyceraldehyde 3-phosphate and pyruvate: step 1/1. Catalyzes the acyloin condensation reaction between C atoms 2 and 3 of pyruvate and glyceraldehyde 3-phosphate to yield 1-deoxy-D-xylulose-5-phosphate (DXP). The sequence is that of 1-deoxy-D-xylulose-5-phosphate synthase from Neisseria meningitidis serogroup C / serotype 2a (strain ATCC 700532 / DSM 15464 / FAM18).